Here is a 308-residue protein sequence, read N- to C-terminus: Putative S-adenosyl-L-methionine-dependent methyltransferase MAB_4585c (308 aa).

Residues D131 and 160–161 contribute to the S-adenosyl-L-methionine site; that span reads DL.

The protein belongs to the UPF0677 family.

In terms of biological role, exhibits S-adenosyl-L-methionine-dependent methyltransferase activity. This chain is Putative S-adenosyl-L-methionine-dependent methyltransferase MAB_4585c, found in Mycobacteroides abscessus (strain ATCC 19977 / DSM 44196 / CCUG 20993 / CIP 104536 / JCM 13569 / NCTC 13031 / TMC 1543 / L948) (Mycobacterium abscessus).